We begin with the raw amino-acid sequence, 104 residues long: Large ribosomal subunit protein bL21 (104 aa).

It belongs to the bacterial ribosomal protein bL21 family. In terms of assembly, part of the 50S ribosomal subunit. Contacts protein L20.

Its function is as follows. This protein binds to 23S rRNA in the presence of protein L20. The protein is Large ribosomal subunit protein bL21 of Helicobacter pylori (strain J99 / ATCC 700824) (Campylobacter pylori J99).